Here is a 605-residue protein sequence, read N- to C-terminus: MSLKHQKQSYQPLPTAAAMDNPAMIQSSGSSGSSSSEEGGSREDVANLSPLGLPTTYSSQQLMPSDTDSMEEERHRLRPHHHHHHPLGEHHHIPGIPPSAVVPSRLSSVGRSQWFTVTVLCFVNLINYMDRFTIAGVLTDVRNDFDIGNDSAGLLQTVFVISYMVCAPIFGYLGDRYSRPWIMAVGVGLWSTTTLLGSFMKQFGWFIAFRALVGIGEASYSTIAPTIISDLFVHDMRSKMLALFYFAIPVGSGLGYIVGSKTAHLANDWRWALRVTPILGIVAVFLILLIKDPVRGHSEGSHNLEATTYKQDIKALVRNRSFMLSTAGFTCVAFVAGALAWWGPSFIYLGMKMQPGNENIVQDDVAFNFGVITMLAGLLGVPLGSFLSQYLVKRYPTADPVICAFGLLVSAPLLTGACLLVNSNSVGTYALIFFGQLALNLNWAIVADILLYVVVPTRRSTAEAFQILISHALGDAGSPYLVGAISEAIMKHLHKNPSDSGLTTELRSMSQVAGSAISNATQVIAEATTSLMETARSSASQEYSDVEQFEGLQYALFSTSFVEVLGGIFFIFTACFIIKDKYNATRGLQDATAQQQQRDERGQIA.

Residues 1–94 form a disordered region; the sequence is MSLKHQKQSY…HPLGEHHHIP (94 aa). Positions 27 to 38 are enriched in low complexity; the sequence is SSGSSGSSSSEE. Positions 55–67 are enriched in polar residues; sequence TTYSSQQLMPSDT. Over residues 76 to 85 the composition is skewed to basic residues; that stretch reads RLRPHHHHHH. The helical transmembrane segment at 115 to 137 threads the bilayer; that stretch reads FTVTVLCFVNLINYMDRFTIAGV. A glycan (N-linked (GlcNAc...) asparagine) is linked at asparagine 149. Helical transmembrane passes span 153-173, 180-200, 203-223, 240-260, and 271-291; these read GLLQ…FGYL, PWIM…GSFM, FGWF…YSTI, MLAL…IVGS, and WALR…LLIK. Asparagine 319 carries N-linked (GlcNAc...) asparagine glycosylation. A run of 5 helical transmembrane segments spans residues 329 to 349, 367 to 387, 401 to 421, 431 to 451, and 465 to 485; these read FTCV…FIYL, FNFG…GSFL, VICA…CLLV, LIFF…DILL, and FQIL…VGAI. An N-linked (GlcNAc...) asparagine glycan is attached at asparagine 519. The helical transmembrane segment at 558-578 threads the bilayer; that stretch reads STSFVEVLGGIFFIFTACFII. N-linked (GlcNAc...) asparagine glycosylation occurs at asparagine 583.

This sequence belongs to the major facilitator superfamily. Spinster (TC 2.A.1.49) family. As to expression, enriched in brain (at protein level).

Its subcellular location is the late endosome membrane. The protein localises to the lysosome membrane. Functionally, probable sphingolipid transporter that plays a central role in endosomes and/or lysosomes storage. Involved in TGF-beta-mediated synaptic growth regulation both pre- and postsynaptically via its function in endosomal storage regulation. Also required during oogenesis by regulating yolk spheres storage. This Drosophila melanogaster (Fruit fly) protein is Protein spinster (spin).